We begin with the raw amino-acid sequence, 150 residues long: Large ribosomal subunit protein uL13 (150 aa).

This sequence belongs to the universal ribosomal protein uL13 family. Part of the 50S ribosomal subunit.

Functionally, this protein is one of the early assembly proteins of the 50S ribosomal subunit, although it is not seen to bind rRNA by itself. It is important during the early stages of 50S assembly. This chain is Large ribosomal subunit protein uL13, found in Chlamydia caviae (strain ATCC VR-813 / DSM 19441 / 03DC25 / GPIC) (Chlamydophila caviae).